A 169-amino-acid chain; its full sequence is MLNRLESLTQRVGGSNELIDQWLHARKELLVSYCTVIGIKPQKEKHTPLNAKTLENFCHNLVDYLSSGHFHLYDRIIKEVEGASSPKMALTAKIHPALKNNTQTIMAFHDCYTNIEIDDDSCTEYQQALSDIGEALDARFRLEDQLIQWAAESWQAAQLADADKKSQVN.

Belongs to the Rsd/AlgQ family. In terms of assembly, interacts with RpoD.

The protein resides in the cytoplasm. Binds RpoD and negatively regulates RpoD-mediated transcription activation by preventing the interaction between the primary sigma factor RpoD with the catalytic core of the RNA polymerase and with promoter DNA. May be involved in replacement of the RNA polymerase sigma subunit from RpoD to RpoS during the transition from exponential growth to the stationary phase. In Yersinia pestis, this protein is Regulator of sigma D.